The chain runs to 258 residues: UPF0246 protein CGSHiEE_07045 (258 aa).

It belongs to the UPF0246 family.

This is UPF0246 protein CGSHiEE_07045 from Haemophilus influenzae (strain PittEE).